A 125-amino-acid chain; its full sequence is Type II secretion system protein I (125 aa).

A propeptide spans 1–5 (MKQQG) (leader sequence). Residue methionine 6 is modified to N-methylmethionine. A helical membrane pass occupies residues 6–26 (MTLLEVMVALVIFALAGLTVL).

It belongs to the GSP I family. Type II secretion is composed of four main components: the outer membrane complex, the inner membrane complex, the cytoplasmic secretion ATPase and the periplasm-spanning pseudopilus. Interacts with core component OutG. Cleaved by prepilin peptidase. Post-translationally, methylated by prepilin peptidase at the amino group of the N-terminal methionine once the leader sequence is cleaved by prepilin peptidase.

Its subcellular location is the cell inner membrane. Its function is as follows. Component of the type II secretion system required for the energy-dependent secretion of extracellular factors such as proteases and toxins from the periplasm. Part of the pseudopilus tip complex that is critical for the recognition and binding of secretion substrates. This is Type II secretion system protein I (outI) from Dickeya chrysanthemi (Pectobacterium chrysanthemi).